A 119-amino-acid chain; its full sequence is Large ribosomal subunit protein bL19 (119 aa).

Belongs to the bacterial ribosomal protein bL19 family.

Its function is as follows. This protein is located at the 30S-50S ribosomal subunit interface and may play a role in the structure and function of the aminoacyl-tRNA binding site. The protein is Large ribosomal subunit protein bL19 of Sulfurovum sp. (strain NBC37-1).